Consider the following 734-residue polypeptide: DNA ligase (734 aa).

Residues 42–46 (DAEYD), 91–92 (SL), and E125 each bind NAD(+). Residue K127 is the N6-AMP-lysine intermediate of the active site. Residues R148, E185, K301, and K325 each coordinate NAD(+). 4 residues coordinate Zn(2+): C430, C433, C454, and C460. Positions 655–734 (SADSEVAGKT…DTWLQRVGKA (80 aa)) constitute a BRCT domain.

It belongs to the NAD-dependent DNA ligase family. LigA subfamily. Requires Mg(2+) as cofactor. Mn(2+) is required as a cofactor.

It carries out the reaction NAD(+) + (deoxyribonucleotide)n-3'-hydroxyl + 5'-phospho-(deoxyribonucleotide)m = (deoxyribonucleotide)n+m + AMP + beta-nicotinamide D-nucleotide.. Functionally, DNA ligase that catalyzes the formation of phosphodiester linkages between 5'-phosphoryl and 3'-hydroxyl groups in double-stranded DNA using NAD as a coenzyme and as the energy source for the reaction. It is essential for DNA replication and repair of damaged DNA. The sequence is that of DNA ligase from Mesorhizobium japonicum (strain LMG 29417 / CECT 9101 / MAFF 303099) (Mesorhizobium loti (strain MAFF 303099)).